Reading from the N-terminus, the 70-residue chain is Antimicrobial peptide VpCT1 (70 aa).

The signal sequence occupies residues 1–23; the sequence is MKNQFAVLLVALVLLQLFSQSEA. Leu36 carries the post-translational modification Leucine amide. Positions 37–70 are excised as a propeptide; sequence GKRGLRNFDLEQMDDTYEPELSEADLRYLQDLLR.

It belongs to the non-disulfide-bridged peptide (NDBP) superfamily. Short antimicrobial peptide (group 4) family. As to expression, expressed by the venom gland.

Its subcellular location is the secreted. The protein localises to the target cell membrane. Antimicrobial peptide with potent activity against bacteria S.aureus (MIC=4.7 uM) and E.coli (MIC=31.5 uM), and pathogenic yeasts C.albicans (MIC=25 uM) and C.glabrata (MIC=12.5 uM). Is not very effective against P.aeruginosa (MIC=150 and &gt;300 uM). Also provokes moderate hemolysis on human erythrocytes (HC(50)=10.5 uM). This Mesomexovis punctatus (Scorpion) protein is Antimicrobial peptide VpCT1.